Reading from the N-terminus, the 136-residue chain is Secreted RxLR effector protein 10 (136 aa).

A signal peptide spans 1 to 22; sequence MRVLNFVLTTTVVLLTSSEGIA. Residues 42–56 carry the RxLR-dEER motif; that stretch reads RSLRATENPGSDESR. Residues 42-78 are disordered; that stretch reads RSLRATENPGSDESRLNEKDTGFDPDGSSSKEDEDIG. Residues 53 to 63 show a composition bias toward basic and acidic residues; the sequence is DESRLNEKDTG.

The protein belongs to the RxLR effector family.

Its subcellular location is the secreted. It is found in the host cytoplasm. The protein localises to the host nucleus. Its function is as follows. Effector that acts as a broad suppressor of cell death to interrupt plant immunity. Inhibits cell death induced by cell death-inducing proteins, including the PAMP elicitor INF1 from P.infestans. The polypeptide is Secreted RxLR effector protein 10 (Plasmopara viticola (Downy mildew of grapevine)).